The sequence spans 359 residues: UDP-N-acetylglucosamine--N-acetylmuramyl-(pentapeptide) pyrophosphoryl-undecaprenol N-acetylglucosamine transferase (359 aa).

UDP-N-acetyl-alpha-D-glucosamine is bound by residues 15–17, Asn-127, Arg-166, Ser-191, Ile-245, 264–269, and Gln-290; these read TGG and ALTVSE.

This sequence belongs to the glycosyltransferase 28 family. MurG subfamily.

The protein localises to the cell inner membrane. The catalysed reaction is di-trans,octa-cis-undecaprenyl diphospho-N-acetyl-alpha-D-muramoyl-L-alanyl-D-glutamyl-meso-2,6-diaminopimeloyl-D-alanyl-D-alanine + UDP-N-acetyl-alpha-D-glucosamine = di-trans,octa-cis-undecaprenyl diphospho-[N-acetyl-alpha-D-glucosaminyl-(1-&gt;4)]-N-acetyl-alpha-D-muramoyl-L-alanyl-D-glutamyl-meso-2,6-diaminopimeloyl-D-alanyl-D-alanine + UDP + H(+). Its pathway is cell wall biogenesis; peptidoglycan biosynthesis. Functionally, cell wall formation. Catalyzes the transfer of a GlcNAc subunit on undecaprenyl-pyrophosphoryl-MurNAc-pentapeptide (lipid intermediate I) to form undecaprenyl-pyrophosphoryl-MurNAc-(pentapeptide)GlcNAc (lipid intermediate II). The chain is UDP-N-acetylglucosamine--N-acetylmuramyl-(pentapeptide) pyrophosphoryl-undecaprenol N-acetylglucosamine transferase from Pseudomonas entomophila (strain L48).